The following is a 493-amino-acid chain: UDP-N-acetylmuramoylalanine--D-glutamate ligase (493 aa).

126–132 (GTNGKTT) provides a ligand contact to ATP.

It belongs to the MurCDEF family.

The protein localises to the cytoplasm. The catalysed reaction is UDP-N-acetyl-alpha-D-muramoyl-L-alanine + D-glutamate + ATP = UDP-N-acetyl-alpha-D-muramoyl-L-alanyl-D-glutamate + ADP + phosphate + H(+). Its pathway is cell wall biogenesis; peptidoglycan biosynthesis. Its function is as follows. Cell wall formation. Catalyzes the addition of glutamate to the nucleotide precursor UDP-N-acetylmuramoyl-L-alanine (UMA). This is UDP-N-acetylmuramoylalanine--D-glutamate ligase from Mycolicibacterium smegmatis (strain ATCC 700084 / mc(2)155) (Mycobacterium smegmatis).